The primary structure comprises 247 residues: Oil body-associated protein 2A (247 aa).

The disordered stretch occupies residues Met1–Lys26.

The protein belongs to the OBAP family.

The sequence is that of Oil body-associated protein 2A from Arabidopsis thaliana (Mouse-ear cress).